The following is a 207-amino-acid chain: Histone H1 (207 aa).

Low complexity predominate over residues 1 to 15 (MAEVAPAPAAAAPAK). Disordered stretches follow at residues 1-28 (MAEV…PKKA) and 105-207 (EAKK…PKKK). Ala2 carries the post-translational modification N-acetylalanine. The segment covering 16–27 (APKKKAAAKPKK) has biased composition (basic residues). Residues 28-101 (AGPSVGELIV…GASGSFKLNK (74 aa)) form the H15 domain. Basic residues-rich tracts occupy residues 117–168 (KAKK…KVKK) and 175–207 (KAAK…PKKK).

This sequence belongs to the histone H1/H5 family. In terms of tissue distribution, oncorhyncin II is expressed in skin.

It is found in the nucleus. The protein resides in the chromosome. It localises to the secreted. Its function is as follows. Histones H1 are necessary for the condensation of nucleosome chains into higher-order structures. In terms of biological role, oncorhyncin II has antibacterial activity against Gram-positive and Gram-negative bacteria at submicromolar concentrations. Potentially important role in mucosal defense. The sequence is that of Histone H1 from Oncorhynchus mykiss (Rainbow trout).